The sequence spans 92 residues: Small ribosomal subunit protein uS15c (92 aa).

The protein belongs to the universal ribosomal protein uS15 family. As to quaternary structure, part of the 30S ribosomal subunit.

It localises to the plastid. Its subcellular location is the chloroplast. This chain is Small ribosomal subunit protein uS15c (rps15-A), found in Lemna minor (Common duckweed).